Reading from the N-terminus, the 469-residue chain is UDP-N-acetylmuramate--L-alanine ligase (469 aa).

ATP is bound at residue 114-120 (GTHGKTT).

This sequence belongs to the MurCDEF family.

It is found in the cytoplasm. The catalysed reaction is UDP-N-acetyl-alpha-D-muramate + L-alanine + ATP = UDP-N-acetyl-alpha-D-muramoyl-L-alanine + ADP + phosphate + H(+). Its pathway is cell wall biogenesis; peptidoglycan biosynthesis. In terms of biological role, cell wall formation. The sequence is that of UDP-N-acetylmuramate--L-alanine ligase from Chlorobium phaeovibrioides (strain DSM 265 / 1930) (Prosthecochloris vibrioformis (strain DSM 265)).